Reading from the N-terminus, the 883-residue chain is Mitogen-activated protein kinase kinase kinase YODA (883 aa).

Disordered regions lie at residues 28–193 (GFAS…AEMF), 303–364 (CSPE…PPLL), and 376–396 (SAAT…TVSP). Residues 57–72 (SRLPSRSPSPSTRVSR) show a composition bias toward low complexity. Over residues 94-105 (VTSTDSGMNGSQ) the composition is skewed to polar residues. Residues 143–165 (SVSSGSSVGDIPSDSLLSPLASD) are compositionally biased toward low complexity. Composition is skewed to polar residues over residues 167–189 (ENGN…NKNS) and 314–328 (RMTS…QSGA). The Protein kinase domain maps to 400 to 656 (WKKGRLLGMG…AAQLLDHAFV (257 aa)). ATP is bound by residues 406 to 414 (LGMGSFGHV) and Lys-429. Asp-525 (proton acceptor) is an active-site residue. 2 disordered regions span residues 712–773 (GSGF…GAIP) and 787–838 (EGIG…IQPG). Low complexity predominate over residues 733–756 (SPIFHSHSPHISGRRSPSPISSPH).

This sequence belongs to the protein kinase superfamily. STE Ser/Thr protein kinase family. MAP kinase kinase kinase subfamily. In terms of assembly, interacts with ASK7. Interacts with BSK12/SSP. Binds to BASL and MPK6. In terms of tissue distribution, expressed in roots, leaves, guard cells, stems, flowers and siliques.

The protein resides in the cytoplasm. It localises to the cell cortex. Its subcellular location is the cell membrane. The catalysed reaction is L-seryl-[protein] + ATP = O-phospho-L-seryl-[protein] + ADP + H(+). It catalyses the reaction L-threonyl-[protein] + ATP = O-phospho-L-threonyl-[protein] + ADP + H(+). With respect to regulation, contains an N-terminal autoinhibitory domain. In terms of biological role, functions in a MAP kinase cascade that acts as a molecular switch to regulate the first cell fate decisions in the zygote and the early embryo. Promotes elongation of the zygote and development of its basal daughter cell into the extra-embryonic suspensor. In stomatal development, acts downstream of the LRR receptor TMM, but upstream of the MKK4/MKK5-MPK3/MPK6 module to regulate stomatal cell fate before the guard mother cell (GMC) is specified. Plays a central role in both guard cell identity and pattern formation. This MAPK cascade also functions downstream of the ER receptor in regulating coordinated local cell proliferation, which shapes the morphology of plant organs. Upon brassinosteroid signaling, is inhibited by phosphorylation of its auto-inhibitory N-terminal domain by the GSK3-like kinase ASK7. The chain is Mitogen-activated protein kinase kinase kinase YODA from Arabidopsis thaliana (Mouse-ear cress).